The chain runs to 706 residues: MFNKYVKTFQYGNQTVTLETGEIARQAAAAVKVSMGDTVVFVAVTTNKEVKEGQDFFPLAVDYLERTYAAGKIPGGFFKREGKQSEKEILTSRLIDRPIRPLFPEGFYHDIQIVAMVVSVDPEIDSDIPAMLGASAALVLSGVPFAGPIGAARVGYINGVYVLNPTKAELAKSQLDLVVAGTSKAVLMVESEAKILPEDVMLGAVVYGHDQMQVAINAINEFADEVNPEVWDWKAPETNEELVAKVRGIAGETIKEAFKIRQKQARSAKLDEAWNAVKEALITEETDTLAANEIKGIFKRLEADVVRSQILDGQPRIDGRDTRTVRPLNIQTGVLPRTHGSALFTRGETQALAVATLGTSRDEQIIDALSGEYTDRFMLHYNFPPYSTGEVGRMGAPKRREIGHGRLAKRALLAVLPKPEDFSYTMRVVSEITESNGSSSMASVCGGCLSLLSAGVPLKAHVAGIAMGLILEGNKFAVLTDILGDEDHLGDMDFKVAGTTEGVTALQMDIKIQGITKEIMQIALAQAKEARLHILDQMKAAVAGPQELSAHAPRLFTMKISQDKIRDVIGKGGETIRSITAETGTEINIAEDGTITIAATTQEAGDAAKKRIEEITAEVEVGKVYEGTVVKILDNNVGAIVSVMPGKDGLVHISQIAHERVRNVGDYLQVGQVVNVKALEVDDRGRVRLSIKALLDAPVREENAAE.

Mg(2+) contacts are provided by Asp487 and Asp493. In terms of domain architecture, KH spans 553–612; sequence PRLFTMKISQDKIRDVIGKGGETIRSITAETGTEINIAEDGTITIAATTQEAGDAAKKRI. Residues 622 to 692 enclose the S1 motif domain; that stretch reads GKVYEGTVVK…DRGRVRLSIK (71 aa).

Belongs to the polyribonucleotide nucleotidyltransferase family. Mg(2+) serves as cofactor.

It localises to the cytoplasm. The catalysed reaction is RNA(n+1) + phosphate = RNA(n) + a ribonucleoside 5'-diphosphate. Its function is as follows. Involved in mRNA degradation. Catalyzes the phosphorolysis of single-stranded polyribonucleotides processively in the 3'- to 5'-direction. This is Polyribonucleotide nucleotidyltransferase from Neisseria gonorrhoeae (strain ATCC 700825 / FA 1090).